The sequence spans 244 residues: Carboxy-S-adenosyl-L-methionine synthase (244 aa).

S-adenosyl-L-methionine-binding positions include Tyr38, 63–65 (GCS), 88–89 (DN), 116–117 (DI), Asn131, and Arg198.

It belongs to the class I-like SAM-binding methyltransferase superfamily. Cx-SAM synthase family. As to quaternary structure, homodimer.

The catalysed reaction is prephenate + S-adenosyl-L-methionine = carboxy-S-adenosyl-L-methionine + 3-phenylpyruvate + H2O. Functionally, catalyzes the conversion of S-adenosyl-L-methionine (SAM) to carboxy-S-adenosyl-L-methionine (Cx-SAM). This is Carboxy-S-adenosyl-L-methionine synthase from Haemophilus ducreyi (strain 35000HP / ATCC 700724).